Consider the following 421-residue polypeptide: NADH-quinone oxidoreductase subunit F (421 aa).

An NAD(+)-binding site is contributed by 54-63 (GRGGAGFSTG). 166–213 (GAGAYICGEETALLESLEGKKGMPRLKPPFPAGFGLYGCPTTINNVES) lines the FMN pocket. [4Fe-4S] cluster contacts are provided by Cys344, Cys347, Cys350, and Cys390.

It belongs to the complex I 51 kDa subunit family. It depends on FMN as a cofactor. [4Fe-4S] cluster is required as a cofactor.

The enzyme catalyses a quinone + NADH + 5 H(+)(in) = a quinol + NAD(+) + 4 H(+)(out). NDH-1 shuttles electrons from NADH, via FMN and iron-sulfur (Fe-S) centers, to quinones in the respiratory chain. Couples the redox reaction to proton translocation (for every two electrons transferred, four hydrogen ions are translocated across the cytoplasmic membrane), and thus conserves the redox energy in a proton gradient. In Rickettsia rickettsii (strain Sheila Smith), this protein is NADH-quinone oxidoreductase subunit F (nuoF).